A 357-amino-acid chain; its full sequence is S-adenosyl-L-methionine:benzoic acid/salicylic acid carboxyl methyltransferase 3 (357 aa).

Tyr18 serves as a coordination point for S-adenosyl-L-homocysteine. Gln25 serves as a coordination point for benzoate. Cys59, Asn64, Asp96, Leu97, Ser135, and Phe136 together coordinate S-adenosyl-L-homocysteine. Trp157 contacts benzoate. Mg(2+)-binding residues include Asn168, Asp254, Phe256, and Asn257. Gln260 is a binding site for benzoate.

The protein belongs to the methyltransferase superfamily. Type-7 methyltransferase family.

It carries out the reaction benzoate + S-adenosyl-L-methionine = methyl benzoate + S-adenosyl-L-homocysteine. Its pathway is aromatic compound metabolism. Its function is as follows. Converts benzoic acid into the volatile ester methyl benzoates. This scent, mostly produced in a rhythmical, diurnal manner, attracts the pollinators. The polypeptide is S-adenosyl-L-methionine:benzoic acid/salicylic acid carboxyl methyltransferase 3 (Petunia hybrida (Petunia)).